A 443-amino-acid polypeptide reads, in one-letter code: Ribosomal protein uS12 methylthiotransferase RimO (443 aa).

One can recognise an MTTase N-terminal domain in the interval 11-121 (PTVGFVSLGC…VMEAVHGALP (111 aa)). Residues C20, C56, C85, C152, C156, and C159 each contribute to the [4Fe-4S] cluster site. In terms of domain architecture, Radical SAM core spans 138-375 (LTPRHYAYLK…METQAEISAA (238 aa)). In terms of domain architecture, TRAM spans 378-443 (DAKIGRTIEV…DAHDLWATPV (66 aa)).

The protein belongs to the methylthiotransferase family. RimO subfamily. [4Fe-4S] cluster is required as a cofactor.

The protein resides in the cytoplasm. It catalyses the reaction L-aspartate(89)-[ribosomal protein uS12]-hydrogen + (sulfur carrier)-SH + AH2 + 2 S-adenosyl-L-methionine = 3-methylsulfanyl-L-aspartate(89)-[ribosomal protein uS12]-hydrogen + (sulfur carrier)-H + 5'-deoxyadenosine + L-methionine + A + S-adenosyl-L-homocysteine + 2 H(+). In terms of biological role, catalyzes the methylthiolation of an aspartic acid residue of ribosomal protein uS12. The protein is Ribosomal protein uS12 methylthiotransferase RimO of Thiobacillus denitrificans (strain ATCC 25259 / T1).